A 347-amino-acid polypeptide reads, in one-letter code: NADH-quinone oxidoreductase subunit H (347 aa).

Transmembrane regions (helical) follow at residues 13–33 (IIMIGQSLLLLVCLLVFIAYV), 50–70 (PNVVGPFGLFQSFADLLKFVF), 82–102 (AVFLLAPLVTVLLALSTWAVV), 115–135 (VGILYIFAISSLEVYGIIMGG), 161–181 (IGFVIVTVLLCVGSLNLTDIV), 198–218 (FLDWHWLSLFPMFIIFFISAL), 263–283 (CSLTTILFLGGWLPPVDIWIL), 286–306 (VPGIIWFMLKACFVFFMFAMV), and 321–341 (LGWKVFLPLSLAMVIIVAFVL).

The protein belongs to the complex I subunit 1 family. As to quaternary structure, NDH-1 is composed of 14 different subunits. Subunits NuoA, H, J, K, L, M, N constitute the membrane sector of the complex.

The protein localises to the cell inner membrane. It carries out the reaction a quinone + NADH + 5 H(+)(in) = a quinol + NAD(+) + 4 H(+)(out). NDH-1 shuttles electrons from NADH, via FMN and iron-sulfur (Fe-S) centers, to quinones in the respiratory chain. The immediate electron acceptor for the enzyme in this species is believed to be ubiquinone. Couples the redox reaction to proton translocation (for every two electrons transferred, four hydrogen ions are translocated across the cytoplasmic membrane), and thus conserves the redox energy in a proton gradient. This subunit may bind ubiquinone. The sequence is that of NADH-quinone oxidoreductase subunit H from Rhizobium leguminosarum bv. trifolii (strain WSM2304).